We begin with the raw amino-acid sequence, 48 residues long: Sperm protamine P1 (48 aa).

The protein belongs to the protamine P1 family. In terms of tissue distribution, testis.

The protein resides in the nucleus. The protein localises to the chromosome. In terms of biological role, protamines substitute for histones in the chromatin of sperm during the haploid phase of spermatogenesis. They compact sperm DNA into a highly condensed, stable and inactive complex. This is Sperm protamine P1 (PRM1) from Corynorhinus townsendii (Townsend's big-eared bat).